Consider the following 529-residue polypeptide: Peptide chain release factor 3 (529 aa).

Positions 11 to 280 (AKRRTFAIIS…GLVEWAPAPM (270 aa)) constitute a tr-type G domain. Residues 20-27 (SHPDAGKT), 88-92 (DTPGH), and 142-145 (NKLD) each bind GTP.

It belongs to the TRAFAC class translation factor GTPase superfamily. Classic translation factor GTPase family. PrfC subfamily.

Its subcellular location is the cytoplasm. In terms of biological role, increases the formation of ribosomal termination complexes and stimulates activities of RF-1 and RF-2. It binds guanine nucleotides and has strong preference for UGA stop codons. It may interact directly with the ribosome. The stimulation of RF-1 and RF-2 is significantly reduced by GTP and GDP, but not by GMP. The chain is Peptide chain release factor 3 from Citrobacter koseri (strain ATCC BAA-895 / CDC 4225-83 / SGSC4696).